A 413-amino-acid chain; its full sequence is Clusterin-associated protein 1 (413 aa).

Positions 185-308 (MRIAIKDLLA…KEEEKRLLKS (124 aa)) form a coiled coil. A disordered region spans residues 303–413 (KRLLKSGSND…EPLDESDNDF (111 aa)). Composition is skewed to acidic residues over residues 312–328 (DDSDIDIQEDDESDSEL) and 360–388 (DSDEDEDSEDSEIDMEDDEEDDDDLEDES). Phosphoserine occurs at positions 314, 324, and 326. A Phosphoserine modification is found at Ser409.

It belongs to the CLUAP1 family. In terms of assembly, interacts with CLU/clusterin. Interacts with UBXN10; the interaction is direct. Expressed in all tissues tested including heart, kidney, skeletal muscle, eye, liver, ovary, oviduct, testes, lung and brain. Elevated levels in multiciliated cells such as the bronchioles of the lungs, ependymal cells of the brain and cells with a single primary cilia of heart and kidney.

The protein resides in the cell projection. It is found in the cilium. The protein localises to the nucleus. In terms of biological role, required for cilia biogenesis. Appears to function within the multiple intraflagellar transport complex B (IFT-B). Key regulator of hedgehog signaling. The polypeptide is Clusterin-associated protein 1 (Cluap1) (Mus musculus (Mouse)).